Reading from the N-terminus, the 200-residue chain is Small ribosomal subunit protein uS4 (200 aa).

Residues 92–155 form the S4 RNA-binding domain; that stretch reads SRLDAVVYSL…QNLDIIKESV (64 aa).

The protein belongs to the universal ribosomal protein uS4 family. Part of the 30S ribosomal subunit. Contacts protein S5. The interaction surface between S4 and S5 is involved in control of translational fidelity.

One of the primary rRNA binding proteins, it binds directly to 16S rRNA where it nucleates assembly of the body of the 30S subunit. In terms of biological role, with S5 and S12 plays an important role in translational accuracy. The protein is Small ribosomal subunit protein uS4 of Staphylococcus haemolyticus (strain JCSC1435).